The chain runs to 228 residues: 7-cyano-7-deazaguanine synthase (228 aa).

8–18 (LSGGLDSTTCL) is an ATP binding site. Zn(2+) contacts are provided by cysteine 188, cysteine 198, cysteine 201, and cysteine 204.

This sequence belongs to the QueC family. It depends on Zn(2+) as a cofactor.

The enzyme catalyses 7-carboxy-7-deazaguanine + NH4(+) + ATP = 7-cyano-7-deazaguanine + ADP + phosphate + H2O + H(+). It functions in the pathway purine metabolism; 7-cyano-7-deazaguanine biosynthesis. In terms of biological role, catalyzes the ATP-dependent conversion of 7-carboxy-7-deazaguanine (CDG) to 7-cyano-7-deazaguanine (preQ(0)). This Legionella pneumophila subsp. pneumophila (strain Philadelphia 1 / ATCC 33152 / DSM 7513) protein is 7-cyano-7-deazaguanine synthase.